Here is a 326-residue protein sequence, read N- to C-terminus: Interleukin-1-binding protein (326 aa).

A signal peptide spans 1–18 (MSIPPVIFLPIFFYSSFV). Ig-like C2-type domains follow at residues 24–115 (PECI…LNLT), 122–208 (SNID…YDVT), and 221–322 (PPTM…KTVT). A disulfide bridge connects residues Cys48 and Cys99. Residues Asn80, Asn103, and Asn113 are each glycosylated (N-linked (GlcNAc...) asparagine; by host). Cys143 and Cys194 are disulfide-bonded. Asn237 carries N-linked (GlcNAc...) asparagine; by host glycosylation. A disulfide bridge connects residues Cys242 and Cys309.

This sequence belongs to the interleukin-1 receptor family. As to quaternary structure, interacts with mouse Il1b.

The protein resides in the secreted. In terms of biological role, may reduce the host inflammatory response by interacting with inteleukin-1 beta (Il1b) and thus decreasing the association between IL1B and its cellular receptor. The chain is Interleukin-1-binding protein (OPG201) from Bos taurus (Bovine).